Reading from the N-terminus, the 189-residue chain is 7-methyl-GTP pyrophosphatase (189 aa).

Catalysis depends on aspartate 71, which acts as the Proton acceptor.

It belongs to the Maf family. YceF subfamily. It depends on a divalent metal cation as a cofactor.

Its subcellular location is the cytoplasm. It carries out the reaction N(7)-methyl-GTP + H2O = N(7)-methyl-GMP + diphosphate + H(+). Its function is as follows. Nucleoside triphosphate pyrophosphatase that hydrolyzes 7-methyl-GTP (m(7)GTP). May have a dual role in cell division arrest and in preventing the incorporation of modified nucleotides into cellular nucleic acids. The chain is 7-methyl-GTP pyrophosphatase from Bdellovibrio bacteriovorus (strain ATCC 15356 / DSM 50701 / NCIMB 9529 / HD100).